The following is a 706-amino-acid chain: Polyribonucleotide nucleotidyltransferase (706 aa).

Asp487 and Asp493 together coordinate Mg(2+). Residues 554 to 613 enclose the KH domain; it reads PRIHTMKISSDKIKDVIGKGGAVIRALCEETGTTIEIEDDGTIKIAATEGAAAKEAIRRI. The S1 motif domain occupies 623-691; that stretch reads GRIYQGKVAR…RQGRVRLSMK (69 aa).

It belongs to the polyribonucleotide nucleotidyltransferase family. Component of the RNA degradosome, which is a multiprotein complex involved in RNA processing and mRNA degradation. Requires Mg(2+) as cofactor.

Its subcellular location is the cytoplasm. The enzyme catalyses RNA(n+1) + phosphate = RNA(n) + a ribonucleoside 5'-diphosphate. In terms of biological role, involved in mRNA degradation. Catalyzes the phosphorolysis of single-stranded polyribonucleotides processively in the 3'- to 5'-direction. This chain is Polyribonucleotide nucleotidyltransferase, found in Vibrio atlanticus (strain LGP32) (Vibrio splendidus (strain Mel32)).